A 179-amino-acid chain; its full sequence is MIFYLHGFDATSPGNHEKMRQLQFIDPDVRLISYSTLHPKHDMQHLLKEVAKQMQYCADPAPLMVGVGLGAYWAERIGFLNGLKSVLINPNLHPEETMQGKIDRPEEYADIANKCVSEFRLKNTHRAMCILSRVDEVLDSEATAEALKPYYTIEWDETQAHKFPQLAAHLPKIKAFKLS.

This sequence belongs to the UPF0227 family.

This chain is UPF0227 protein Shewana3_2292, found in Shewanella sp. (strain ANA-3).